Here is a 375-residue protein sequence, read N- to C-terminus: Alcohol dehydrogenase 1A (375 aa).

G1 carries the post-translational modification N-acetylglycine. C46, H67, C97, C100, C103, C111, and C174 together coordinate Zn(2+). NAD(+) contacts are provided by residues 199–204 (GLGGVG), D223, K228, 293–295 (VGL), and R370.

It belongs to the zinc-containing alcohol dehydrogenase family. Class-I subfamily. In terms of assembly, multimeric (with different ratios of monomers). Zn(2+) serves as cofactor.

The protein localises to the cytoplasm. The enzyme catalyses a primary alcohol + NAD(+) = an aldehyde + NADH + H(+). It catalyses the reaction a secondary alcohol + NAD(+) = a ketone + NADH + H(+). This Saara hardwickii (Indian spiny-tailed lizard) protein is Alcohol dehydrogenase 1A.